A 209-amino-acid chain; its full sequence is Neurotrophin-4 (209 aa).

Residues 1 to 21 (MLPRHSCSLLLFLFLLPSVPM) form the signal peptide. Residues 22–79 (EPHPPSSTLPPFLAPEWDLLSPRVALSRGAPAGPPLLFLLEAGAYGEPAGAPANRSRR) constitute a propeptide that is removed on maturation. N-linked (GlcNAc...) asparagine glycosylation is present at N75. 3 disulfide bridges follow: C96–C169, C140–C198, and C157–C200.

This sequence belongs to the NGF-beta family.

Its subcellular location is the secreted. Target-derived survival factor for peripheral sensory sympathetic neurons. May promote ameloblast differentiation and subsequent reduction in proliferation of ameloblasts. This is Neurotrophin-4 (Ntf4) from Mus musculus (Mouse).